The following is a 328-amino-acid chain: UPF0104 membrane protein AF_2231 (328 aa).

6 consecutive transmembrane segments (helical) span residues 31 to 51 (NWLL…LWAL), 116 to 136 (ILDS…TGFS), 139 to 159 (FGFK…YILY), 221 to 241 (LVTL…LVAL), 245 to 265 (AYFL…LVPL), and 277 to 297 (MAYL…VGLW).

The protein belongs to the UPF0104 family.

The protein localises to the cell membrane. This chain is UPF0104 membrane protein AF_2231, found in Archaeoglobus fulgidus (strain ATCC 49558 / DSM 4304 / JCM 9628 / NBRC 100126 / VC-16).